The primary structure comprises 285 residues: Polyamine aminopropyltransferase (285 aa).

Residues 5–241 enclose the PABS domain; it reads DNWYIEHFQP…GWWSVTMASK (237 aa). An S-methyl-5'-thioadenosine-binding site is contributed by glutamine 35. Residues histidine 66 and aspartate 90 each coordinate spermidine. S-methyl-5'-thioadenosine is bound by residues aspartate 110 and 141-142; that span reads DG. The active-site Proton acceptor is the aspartate 160. Position 160–163 (160–163) interacts with spermidine; it reads DSTD. Position 167 (proline 167) interacts with S-methyl-5'-thioadenosine.

This sequence belongs to the spermidine/spermine synthase family. In terms of assembly, homodimer or homotetramer.

Its subcellular location is the cytoplasm. It catalyses the reaction S-adenosyl 3-(methylsulfanyl)propylamine + putrescine = S-methyl-5'-thioadenosine + spermidine + H(+). Its pathway is amine and polyamine biosynthesis; spermidine biosynthesis; spermidine from putrescine: step 1/1. Functionally, catalyzes the irreversible transfer of a propylamine group from the amino donor S-adenosylmethioninamine (decarboxy-AdoMet) to putrescine (1,4-diaminobutane) to yield spermidine. This chain is Polyamine aminopropyltransferase, found in Xanthomonas campestris pv. campestris (strain 8004).